Consider the following 205-residue polypeptide: Non-structural protein NS3 (205 aa).

The segment at 177 to 205 is disordered; it reads GTRSPETGCRKVTSGLPHGASGGSGTRQG. Over residues 196–205 the composition is skewed to gly residues; the sequence is ASGGSGTRQG.

It belongs to the orbivirus NS3 family.

Functionally, may play a role in the release of virions from infected cells. The protein is Non-structural protein NS3 (Segment-10) of Broadhaven virus (BRD).